Here is a 332-residue protein sequence, read N- to C-terminus: Lipoyl synthase (332 aa).

[4Fe-4S] cluster-binding residues include C79, C84, C90, C105, C109, C112, and S319. A Radical SAM core domain is found at 91–308 (FSHGTATFMI…ADYGYEIGFK (218 aa)).

The protein belongs to the radical SAM superfamily. Lipoyl synthase family. [4Fe-4S] cluster serves as cofactor.

It localises to the cytoplasm. It carries out the reaction [[Fe-S] cluster scaffold protein carrying a second [4Fe-4S](2+) cluster] + N(6)-octanoyl-L-lysyl-[protein] + 2 oxidized [2Fe-2S]-[ferredoxin] + 2 S-adenosyl-L-methionine + 4 H(+) = [[Fe-S] cluster scaffold protein] + N(6)-[(R)-dihydrolipoyl]-L-lysyl-[protein] + 4 Fe(3+) + 2 hydrogen sulfide + 2 5'-deoxyadenosine + 2 L-methionine + 2 reduced [2Fe-2S]-[ferredoxin]. The protein operates within protein modification; protein lipoylation via endogenous pathway; protein N(6)-(lipoyl)lysine from octanoyl-[acyl-carrier-protein]: step 2/2. In terms of biological role, catalyzes the radical-mediated insertion of two sulfur atoms into the C-6 and C-8 positions of the octanoyl moiety bound to the lipoyl domains of lipoate-dependent enzymes, thereby converting the octanoylated domains into lipoylated derivatives. The protein is Lipoyl synthase of Hahella chejuensis (strain KCTC 2396).